We begin with the raw amino-acid sequence, 296 residues long: NADH-cytochrome b5 reductase 2 (296 aa).

Residues 12–29 traverse the membrane as a helical segment; sequence LPIALGVGAASIATAIIL. Positions 47 to 151 constitute an FAD-binding FR-type domain; sequence NEWIDLPIIK…KGPITKWEWK (105 aa). FAD is bound at residue 154–189; the sequence is SYDSITLLGAGTGINPLYQLVHHIAENPEDNTKIHL.

The protein belongs to the flavoprotein pyridine nucleotide cytochrome reductase family. The cofactor is FAD.

The protein localises to the mitochondrion outer membrane. It carries out the reaction 2 Fe(III)-[cytochrome b5] + NADH = 2 Fe(II)-[cytochrome b5] + NAD(+) + H(+). May mediate the reduction of outer membrane cytochrome b5. This is NADH-cytochrome b5 reductase 2 (MCR1) from Kluyveromyces lactis (strain ATCC 8585 / CBS 2359 / DSM 70799 / NBRC 1267 / NRRL Y-1140 / WM37) (Yeast).